The primary structure comprises 151 residues: uncharacterized protein (151 aa).

Residues 123 to 151 (PAGQNAGTGPAQKLKTDETRCYERRGGSQ) are disordered. The span at 136–151 (LKTDETRCYERRGGSQ) shows a compositional bias: basic and acidic residues.

This is an uncharacterized protein from Triticum aestivum (Wheat).